The primary structure comprises 335 residues: Beta-ketoacyl-[acyl-carrier-protein] synthase III (335 aa).

Active-site residues include Cys-119 and His-261. Positions Gln-262–Arg-266 are ACP-binding. Asn-291 is a catalytic residue.

Belongs to the thiolase-like superfamily. FabH family. As to quaternary structure, homodimer.

It localises to the cytoplasm. The catalysed reaction is malonyl-[ACP] + acetyl-CoA + H(+) = 3-oxobutanoyl-[ACP] + CO2 + CoA. It functions in the pathway lipid metabolism; fatty acid biosynthesis. In terms of biological role, catalyzes the condensation reaction of fatty acid synthesis by the addition to an acyl acceptor of two carbons from malonyl-ACP. Catalyzes the first condensation reaction which initiates fatty acid synthesis and may therefore play a role in governing the total rate of fatty acid production. Possesses both acetoacetyl-ACP synthase and acetyl transacylase activities. Its substrate specificity determines the biosynthesis of branched-chain and/or straight-chain of fatty acids. The polypeptide is Beta-ketoacyl-[acyl-carrier-protein] synthase III (Prochlorococcus marinus (strain MIT 9215)).